The chain runs to 534 residues: Probable alpha-galactosidase A (534 aa).

A signal peptide spans 1-25 (MRLITRWIPLANALASTMPVQVVAS). An intrachain disulfide couples Cys47 to Cys79. N-linked (GlcNAc...) asparagine glycosylation is found at Asn50, Asn88, Asn94, and Asn124. A disulfide bridge links Cys127 with Cys157. Asp155 functions as the Nucleophile in the catalytic mechanism. An N-linked (GlcNAc...) asparagine glycan is attached at Asn204. Catalysis depends on Asp213, which acts as the Proton donor. The 122-residue stretch at 413–534 (CSQVIPTGLI…GLPAGVHVAL (122 aa)) folds into the Ricin B-type lectin domain. Residues Cys430 and Cys443 are joined by a disulfide bond. A glycan (N-linked (GlcNAc...) asparagine) is linked at Asn444. Residues Cys468 and Cys481 are joined by a disulfide bond.

The protein belongs to the glycosyl hydrolase 27 family.

It localises to the secreted. It catalyses the reaction Hydrolysis of terminal, non-reducing alpha-D-galactose residues in alpha-D-galactosides, including galactose oligosaccharides, galactomannans and galactolipids.. In terms of biological role, hydrolyzes a variety of simple alpha-D-galactoside as well as more complex molecules such as oligosaccharides and polysaccharides. This Aspergillus flavus (strain ATCC 200026 / FGSC A1120 / IAM 13836 / NRRL 3357 / JCM 12722 / SRRC 167) protein is Probable alpha-galactosidase A (aglA).